A 311-amino-acid chain; its full sequence is Methionyl-tRNA formyltransferase (311 aa).

112 to 115 provides a ligand contact to (6S)-5,6,7,8-tetrahydrofolate; sequence SLLP.

The protein belongs to the Fmt family.

It carries out the reaction L-methionyl-tRNA(fMet) + (6R)-10-formyltetrahydrofolate = N-formyl-L-methionyl-tRNA(fMet) + (6S)-5,6,7,8-tetrahydrofolate + H(+). In terms of biological role, attaches a formyl group to the free amino group of methionyl-tRNA(fMet). The formyl group appears to play a dual role in the initiator identity of N-formylmethionyl-tRNA by promoting its recognition by IF2 and preventing the misappropriation of this tRNA by the elongation apparatus. The sequence is that of Methionyl-tRNA formyltransferase from Geobacter metallireducens (strain ATCC 53774 / DSM 7210 / GS-15).